A 1194-amino-acid chain; its full sequence is DNA polymerase catalytic subunit (1194 aa).

The protein belongs to the DNA polymerase type-B family. In terms of assembly, forms a complex with the ssDNA-binding protein, the DNA polymerase processivity factor, and the alkaline exonuclease. Interacts with the helicase-primase complex composed of the primase, the helicase and the primase-associated factor; this interaction may coordinate leading and lagging strand DNA synthesis at the replication fork.

The protein resides in the host nucleus. The enzyme catalyses DNA(n) + a 2'-deoxyribonucleoside 5'-triphosphate = DNA(n+1) + diphosphate. The catalysed reaction is Endonucleolytic cleavage to 5'-phosphomonoester.. Functionally, replicates viral genomic DNA. The replication complex is composed of six viral proteins: the DNA polymerase, processivity factor, primase, primase-associated factor, helicase, and ssDNA-binding protein. Additionally, the polymerase contains an intrinsic ribonuclease H (RNase H) activity that specifically degrades RNA/DNA heteroduplexes or duplex DNA substrates in the 5' to 3' direction. Therefore, it can catalyze the excision of the RNA primers that initiate the synthesis of Okazaki fragments at a replication fork during viral DNA replication. The chain is DNA polymerase catalytic subunit from Varicella-zoster virus (strain Dumas) (HHV-3).